The primary structure comprises 70 residues: Large ribosomal subunit protein eL38 (70 aa).

The protein belongs to the eukaryotic ribosomal protein eL38 family.

The sequence is that of Large ribosomal subunit protein eL38 (RpL38) from Aedes aegypti (Yellowfever mosquito).